A 556-amino-acid polypeptide reads, in one-letter code: 2-isopropylmalate synthase (556 aa).

The region spanning 33 to 307 is the Pyruvate carboxyltransferase domain; that stretch reads PIWCSSDLRD…HPQLDFSDID (275 aa). Mg(2+)-binding residues include D42, H246, H248, and N282. The regulatory domain stretch occupies residues 439 to 556; the sequence is ATSPYALASH…AVTQAEAKAA (118 aa).

It belongs to the alpha-IPM synthase/homocitrate synthase family. LeuA type 2 subfamily. As to quaternary structure, homodimer. It depends on Mg(2+) as a cofactor.

It is found in the cytoplasm. The enzyme catalyses 3-methyl-2-oxobutanoate + acetyl-CoA + H2O = (2S)-2-isopropylmalate + CoA + H(+). It functions in the pathway amino-acid biosynthesis; L-leucine biosynthesis; L-leucine from 3-methyl-2-oxobutanoate: step 1/4. Functionally, catalyzes the condensation of the acetyl group of acetyl-CoA with 3-methyl-2-oxobutanoate (2-ketoisovalerate) to form 3-carboxy-3-hydroxy-4-methylpentanoate (2-isopropylmalate). This Pseudomonas paraeruginosa (strain DSM 24068 / PA7) (Pseudomonas aeruginosa (strain PA7)) protein is 2-isopropylmalate synthase.